Consider the following 1315-residue polypeptide: MQEDSIEASTSISQLLRESYLAETRHRGDNERSRAEPSSNPFHFSGPGAAEGGGPEDLPDLSAFLSQEELDESVNLARLAINHDPLERVDEAQARKRLSSDQTKHASKPSFEPAFHQDSSRGPASPKDSPPETKRPQYSSETQSKKVFLNKAADFIEELSSLFKAHSSKRIRPRACKNHKSKTESQNKVLQENSPTFSDLTERRERASVPIPIPADSRDNELNHAIEQREAKRREAELAAGEAAAGDSTPGSSPSSLYYEEPLGQPPRFTQKLRSREVPEGSRVQLDCIVVGIPPPQVRWYCEGKELENSPDIHIVQAGNLHSLTIAEAFEEDTGRYSCFASNIYGTDSTSAEIYIEGVSSSDSEGDPNKEEMNRIQKPNEVSSPPTTSAAIPPAAEAQPLAAQPRVSTVQQCQSPTNYLQGLNGKPIIAAPVFTKMLQNLSASEGQLVVFECRVKGAPSPKVEWYREGTLIEDSPDFRILQKKPRSMAEPEEICTLVIAEVFSEDSGCFTCTASNKYGTVSSIAQLDVRGNEDISDNGALHSANSTTNPAVAEHQPSPLNPQPLSEEQPPKPKLEGVLVNHNEPRSSSRIGLRVHFNLPEDDKDMEASSGSGAANTSQTRPNSFPERFNGQEARIPEPSSPIKEPPPVLAKPKLDSTQLQQLHNQVLLEQQQLQNTSPSSPKESLHMSALNSAPPAVTISSKQVKGPAPQMFNLARPKHFFPASSTSTATVSPSSSPVFTLSNTPQTIQRTVSKESLLMAHPSTQGRSPGGLSIQNEPAPPSPAEPAAPPTAAYSIPSGNQFQPHCVSPTPVSPTGRIQNPVAFLSSVLPSLPSIPPTNAMGLPKSAPSVPSQGLMKKTTKAPQAVSDDYIRETKNSVILDLGKKVNFGDVRSHQQEYKISSFEQRLMNEIEFRLERTPVDESDDEIEHDEIPTGKCIAPIFDKRLKHFRVTEGSPVTFTCKIVGIPVPKVYWFKDGKQISKRNEHCKMRREGDGTCSLHIESTHGDDDGNYTIMAANPQGRISCSGHLMVQGLPIRSRLSPALSHRGRSRMQERDKEPLQERFFRPHFLQAPGDMVAHEGRLCRLDCKVSGLPPPELTWLLNGQPVLPDASHKMLVRETGVHSLLIDPLTQRDAGTYTCVATNKTGQNSFSLELTVVAKEVKKAPVILEKLQNSGVPEGHPVRLEGRVIGMPPPVFYWKKDNETIPFTRERISMHQDTTGYVCLLIQPAKKSDAGWYTLSAKNEAGIVSCTARLDIYAQWHQQIPTPISIRPSGSRYGSLTSKGLDIFSAFSSVESTMLYSCTSRSVVESDEL.

Disordered stretches follow at residues 19 to 60 (SYLA…DLPD), 81 to 145 (INHD…TQSK), 166 to 204 (HSSKRIRPRACKNHKSKTESQNKVLQENSPTFSDLTERR), and 230 to 266 (EAKRREAELAAGEAAAGDSTPGSSPSSLYYEEPLGQP). Basic and acidic residues-rich tracts occupy residues 23–35 (ETRHRGDNERSRA) and 84–104 (DPLERVDEAQARKRLSSDQTK). 2 positions are modified to phosphoserine: S99 and S129. Residues 166-180 (HSSKRIRPRACKNHK) show a composition bias toward basic residues. The segment covering 184–199 (ESQNKVLQENSPTFSD) has biased composition (polar residues). The stretch at 219–240 (DNELNHAIEQREAKRREAELAA) forms a coiled coil. A Phosphothreonine modification is found at T249. The Ig-like 1 domain maps to 267 to 357 (PRFTQKLRSR…DSTSAEIYIE (91 aa)). An intrachain disulfide couples C288 to C339. A disordered region spans residues 359 to 392 (VSSSDSEGDPNKEEMNRIQKPNEVSSPPTTSAAI). The Ig-like 2 domain maps to 432–528 (PVFTKMLQNL…GTVSSIAQLD (97 aa)). A disulfide bridge connects residues C453 and C512. Disordered regions lie at residues 535 to 652 (ISDN…VLAK), 674 to 704 (LQNTSPSSPKESLHMSALNSAPPAVTISSKQ), and 725 to 747 (SSTSTATVSPSSSPVFTLSNTPQ). The span at 609–623 (SSGSGAANTSQTRPN) shows a compositional bias: polar residues. Residue S641 is modified to Phosphoserine. A compositionally biased stretch (low complexity) spans 725–741 (SSTSTATVSPSSSPVFT). Position 754 is a phosphoserine (S754). Disordered stretches follow at residues 762-814 (HPST…TPVS) and 840-865 (NAMGLPKSAPSVPSQGLMKKTTKAPQ). Over residues 779–790 (PAPPSPAEPAAP) the composition is skewed to pro residues. Phosphoserine occurs at positions 809 and 814. Phosphoserine is present on residues S903 and S924. Ig-like domains lie at 941-1025 (PIFD…GRIS), 1068-1157 (PHFL…LELT), and 1167-1257 (PVIL…ARLD). An intrachain disulfide couples C1089 to C1141.

Belongs to the myotilin/palladin family. Interacts with TTN/titin, NEB, NEBL, ACTN2 and CARP.

Its subcellular location is the cytoplasm. It localises to the nucleus. The protein localises to the myofibril. The protein resides in the sarcomere. It is found in the z line. In terms of biological role, component of the sarcomere that tethers together nebulin (skeletal muscle) and nebulette (cardiac muscle) to alpha-actinin, at the Z lines. This is Myopalladin (Mypn) from Mus musculus (Mouse).